Reading from the N-terminus, the 476-residue chain is Cytochrome c oxidase subunit 1 (476 aa).

A helical transmembrane segment spans residues 19-39; sequence LYYLWFSFLFGIYGFLLSVIL. Glutamate 42 is a Ca(2+) binding site. 8 helical membrane passes run 61–81, 105–125, 144–164, 194–214, 240–260, 278–298, 309–329, and 345–365; these read MIFTVHGIIMIFFNIMPGLFG, ISLLLQPIAFILVILSTAAEF, LSPVAVDVIVIGLLVSGIASI, LIITSIMLLLTLPVLTGGVLM, LLWFFGHPEVYILILPAFGII, MILAMGCIAVLGSVVWVHHMY, FFTSTTILISIPTGTKVFNWL, and LLSLLFICTFTFGGTTGVILG. Residue histidine 66 participates in Fe(II)-heme a binding. Cu cation is bound at residue histidine 246. A cross-link (1'-histidyl-3'-tyrosine (His-Tyr)) is located at residues 246-250; it reads HPEVY. Tyrosine 250 lines the O2 pocket. Residues histidine 295 and histidine 296 each coordinate Cu cation. Histidine 374 and aspartate 375 together coordinate Mg(2+). The next 2 membrane-spanning stretches (helical) occupy residues 379-399 and 415-435; these read VIAHFHFVLSIGAIIALFTSV and TIIVLWSILFFVGVVLTFLPM. Histidine 382 contributes to the heme a3 binding site. Residue histidine 384 participates in Fe(II)-heme a binding. Position 448 (proline 448) interacts with Ca(2+). The helical transmembrane segment at 455–475 threads the bilayer; sequence NGWNMICSIGSTMTLFGLLIF.

The protein belongs to the heme-copper respiratory oxidase family. In terms of assembly, component of the cytochrome c oxidase (complex IV, CIV), a multisubunit enzyme composed of a catalytic core of 3 subunits and several supernumerary subunits. The complex exists as a monomer or a dimer and forms supercomplexes (SCs) in the inner mitochondrial membrane with ubiquinol-cytochrome c oxidoreductase (cytochrome b-c1 complex, complex III, CIII). Requires heme as cofactor. The cofactor is Cu cation.

It localises to the mitochondrion inner membrane. It catalyses the reaction 4 Fe(II)-[cytochrome c] + O2 + 8 H(+)(in) = 4 Fe(III)-[cytochrome c] + 2 H2O + 4 H(+)(out). The protein operates within energy metabolism; oxidative phosphorylation. In terms of biological role, component of the cytochrome c oxidase, the last enzyme in the mitochondrial electron transport chain which drives oxidative phosphorylation. The respiratory chain contains 3 multisubunit complexes succinate dehydrogenase (complex II, CII), ubiquinol-cytochrome c oxidoreductase (cytochrome b-c1 complex, complex III, CIII) and cytochrome c oxidase (complex IV, CIV), that cooperate to transfer electrons derived from NADH and succinate to molecular oxygen, creating an electrochemical gradient over the inner membrane that drives transmembrane transport and the ATP synthase. Cytochrome c oxidase is the component of the respiratory chain that catalyzes the reduction of oxygen to water. Electrons originating from reduced cytochrome c in the intermembrane space (IMS) are transferred via the dinuclear copper A center (CU(A)) of subunit 2 and heme A of subunit 1 to the active site in subunit 1, a binuclear center (BNC) formed by heme A3 and copper B (CU(B)). The BNC reduces molecular oxygen to 2 water molecules using 4 electrons from cytochrome c in the IMS and 4 protons from the mitochondrial matrix. This chain is Cytochrome c oxidase subunit 1 (COI), found in Plasmodium chabaudi.